The chain runs to 370 residues: Aminomethyltransferase (370 aa).

This sequence belongs to the GcvT family. As to quaternary structure, the glycine cleavage system is composed of four proteins: P, T, L and H.

It catalyses the reaction N(6)-[(R)-S(8)-aminomethyldihydrolipoyl]-L-lysyl-[protein] + (6S)-5,6,7,8-tetrahydrofolate = N(6)-[(R)-dihydrolipoyl]-L-lysyl-[protein] + (6R)-5,10-methylene-5,6,7,8-tetrahydrofolate + NH4(+). Functionally, the glycine cleavage system catalyzes the degradation of glycine. The polypeptide is Aminomethyltransferase (Stenotrophomonas maltophilia (strain R551-3)).